The primary structure comprises 246 residues: ATP synthase subunit a, chloroplastic (246 aa).

Helical transmembrane passes span 35-55 (GQVFIVSWLVIAALIGFALVG), 94-114 (VPYIATVFLFIFGANWAGALI), 133-153 (INVTVALALLTSLSYFYAGLS), and 202-222 (VFALLVPILIPLPVMTLGLFA).

Belongs to the ATPase A chain family. As to quaternary structure, F-type ATPases have 2 components, CF(1) - the catalytic core - and CF(0) - the membrane proton channel. CF(1) has five subunits: alpha(3), beta(3), gamma(1), delta(1), epsilon(1). CF(0) has four main subunits: a, b, b' and c.

It localises to the plastid. It is found in the chloroplast thylakoid membrane. Functionally, key component of the proton channel; it plays a direct role in the translocation of protons across the membrane. This chain is ATP synthase subunit a, chloroplastic, found in Rhodomonas salina (Cryptomonas salina).